A 197-amino-acid chain; its full sequence is Thymidylate kinase (197 aa).

7 to 14 serves as a coordination point for ATP; it reads GIDGSGKS.

Belongs to the thymidylate kinase family.

The enzyme catalyses dTMP + ATP = dTDP + ADP. Its function is as follows. Phosphorylation of dTMP to form dTDP in both de novo and salvage pathways of dTTP synthesis. The sequence is that of Thymidylate kinase (tmk) from Thermotoga maritima (strain ATCC 43589 / DSM 3109 / JCM 10099 / NBRC 100826 / MSB8).